The primary structure comprises 237 residues: Sugar fermentation stimulation protein homolog (237 aa).

The protein belongs to the SfsA family.

The polypeptide is Sugar fermentation stimulation protein homolog (Synechocystis sp. (strain ATCC 27184 / PCC 6803 / Kazusa)).